The sequence spans 220 residues: Deoxyribose-phosphate aldolase (220 aa).

Asp92 functions as the Proton donor/acceptor in the catalytic mechanism. Lys155 functions as the Schiff-base intermediate with acetaldehyde in the catalytic mechanism. Lys184 (proton donor/acceptor) is an active-site residue.

Belongs to the DeoC/FbaB aldolase family. DeoC type 1 subfamily.

It is found in the cytoplasm. The enzyme catalyses 2-deoxy-D-ribose 5-phosphate = D-glyceraldehyde 3-phosphate + acetaldehyde. Its pathway is carbohydrate degradation; 2-deoxy-D-ribose 1-phosphate degradation; D-glyceraldehyde 3-phosphate and acetaldehyde from 2-deoxy-alpha-D-ribose 1-phosphate: step 2/2. In terms of biological role, catalyzes a reversible aldol reaction between acetaldehyde and D-glyceraldehyde 3-phosphate to generate 2-deoxy-D-ribose 5-phosphate. The sequence is that of Deoxyribose-phosphate aldolase from Symbiobacterium thermophilum (strain DSM 24528 / JCM 14929 / IAM 14863 / T).